A 255-amino-acid polypeptide reads, in one-letter code: uncharacterized protein (255 aa).

An N-terminal signal peptide occupies residues 1–23; the sequence is MKRLNKLVLGIIFLFLVISITAG. Cysteine 24 carries N-palmitoyl cysteine lipidation. Cysteine 24 carries S-diacylglycerol cysteine lipidation.

It belongs to the staphylococcal tandem lipoprotein family.

It is found in the cell membrane. This is an uncharacterized protein from Staphylococcus aureus (strain USA300).